The following is a 504-amino-acid chain: L-arabinose isomerase (504 aa).

4 residues coordinate Mn(2+): Glu308, Glu335, His352, and His452.

Belongs to the arabinose isomerase family. It depends on Mn(2+) as a cofactor.

It catalyses the reaction beta-L-arabinopyranose = L-ribulose. The protein operates within carbohydrate degradation; L-arabinose degradation via L-ribulose; D-xylulose 5-phosphate from L-arabinose (bacterial route): step 1/3. Its function is as follows. Catalyzes the conversion of L-arabinose to L-ribulose. This chain is L-arabinose isomerase, found in Bifidobacterium adolescentis (strain ATCC 15703 / DSM 20083 / NCTC 11814 / E194a).